The following is a 430-amino-acid chain: 3-phosphoshikimate 1-carboxyvinyltransferase (430 aa).

The 3-phosphoshikimate site is built by lysine 23, serine 24, and arginine 28. Residue lysine 23 participates in phosphoenolpyruvate binding. Phosphoenolpyruvate-binding residues include glycine 95 and arginine 123. 4 residues coordinate 3-phosphoshikimate: serine 169, glutamine 171, aspartate 315, and lysine 342. Glutamine 171 contacts phosphoenolpyruvate. Aspartate 315 functions as the Proton acceptor in the catalytic mechanism. Phosphoenolpyruvate-binding residues include arginine 346 and arginine 388.

It belongs to the EPSP synthase family. As to quaternary structure, monomer.

Its subcellular location is the cytoplasm. The catalysed reaction is 3-phosphoshikimate + phosphoenolpyruvate = 5-O-(1-carboxyvinyl)-3-phosphoshikimate + phosphate. It functions in the pathway metabolic intermediate biosynthesis; chorismate biosynthesis; chorismate from D-erythrose 4-phosphate and phosphoenolpyruvate: step 6/7. Functionally, catalyzes the transfer of the enolpyruvyl moiety of phosphoenolpyruvate (PEP) to the 5-hydroxyl of shikimate-3-phosphate (S3P) to produce enolpyruvyl shikimate-3-phosphate and inorganic phosphate. This is 3-phosphoshikimate 1-carboxyvinyltransferase from Streptococcus pyogenes serotype M2 (strain MGAS10270).